We begin with the raw amino-acid sequence, 78 residues long: Acyl carrier protein (78 aa).

Residues 2–77 (STIEERVKKI…AAIDYVKAHQ (76 aa)) form the Carrier domain. S37 carries the O-(pantetheine 4'-phosphoryl)serine modification.

Belongs to the acyl carrier protein (ACP) family. Post-translationally, 4'-phosphopantetheine is transferred from CoA to a specific serine of apo-ACP by AcpS. This modification is essential for activity because fatty acids are bound in thioester linkage to the sulfhydryl of the prosthetic group.

It is found in the cytoplasm. The protein operates within lipid metabolism; fatty acid biosynthesis. Its function is as follows. Carrier of the growing fatty acid chain in fatty acid biosynthesis. The chain is Acyl carrier protein from Pseudomonas putida (strain ATCC 47054 / DSM 6125 / CFBP 8728 / NCIMB 11950 / KT2440).